The sequence spans 259 residues: Phosphate import ATP-binding protein PstB (259 aa).

Positions isoleucine 13–isoleucine 254 constitute an ABC transporter domain. Glycine 45–serine 52 contributes to the ATP binding site.

This sequence belongs to the ABC transporter superfamily. Phosphate importer (TC 3.A.1.7) family. As to quaternary structure, the complex is composed of two ATP-binding proteins (PstB), two transmembrane proteins (PstC and PstA) and a solute-binding protein (PstS).

It is found in the cell inner membrane. The catalysed reaction is phosphate(out) + ATP + H2O = ADP + 2 phosphate(in) + H(+). Part of the ABC transporter complex PstSACB involved in phosphate import. Responsible for energy coupling to the transport system. This Albidiferax ferrireducens (strain ATCC BAA-621 / DSM 15236 / T118) (Rhodoferax ferrireducens) protein is Phosphate import ATP-binding protein PstB.